Reading from the N-terminus, the 366-residue chain is Endophilin-B1 (366 aa).

The membrane-binding amphipathic helix stretch occupies residues methionine 1 to leucine 30. Residues methionine 1–glutamate 37 are required for membrane binding. A BAR domain is found at glutamate 27 to serine 261. Coiled-coil stretches lie at residues glutamate 34 to glutamine 54 and lysine 160 to alanine 185. The 61-residue stretch at serine 306–asparagine 366 folds into the SH3 domain.

Belongs to the endophilin family. In terms of assembly, homodimer, and heterodimer with SH3GLB2. Binds BAX. Binds DNM1, HTT, AMPH, BIN1 and ARFGAP1.

The protein localises to the cytoplasm. Its subcellular location is the golgi apparatus membrane. It localises to the mitochondrion outer membrane. Functionally, may be required for normal outer mitochondrial membrane dynamics. Required for coatomer-mediated retrograde transport in certain cells. May recruit other proteins to membranes with high curvature. May promote membrane fusion. This chain is Endophilin-B1, found in Gallus gallus (Chicken).